The sequence spans 531 residues: UDP-glucuronosyltransferase 1A5 (531 aa).

The first 25 residues, 1-25 (MGLHVTLQGLAGLLLLLYALPWAEG), serve as a signal peptide directing secretion. N-linked (GlcNAc...) asparagine glycosylation is found at N116, N131, N139, N293, and N431. A helical transmembrane segment spans residues 489–505 (VIGFLLAIVLTVVFIVY).

The protein belongs to the UDP-glycosyltransferase family. In terms of assembly, homodimer. Homooligomer. Interacts with UGT1A1, UGT1A3, UGT1A4, UGT1A6, UGT1A7, UGT1A8, UGT1A9 and UGT1A10 to form heterodimers.

It is found in the endoplasmic reticulum membrane. The catalysed reaction is glucuronate acceptor + UDP-alpha-D-glucuronate = acceptor beta-D-glucuronoside + UDP + H(+). It carries out the reaction zolasartan + UDP-alpha-D-glucuronate = zolarsartan-1-N-beta-D-glucuronide + UDP. UDP-glucuronosyltransferase (UGT) that catalyzes phase II biotransformation reactions in which lipophilic substrates are conjugated with glucuronic acid to increase the metabolite's water solubility, thereby facilitating excretion into either the urine or bile. Essential for the elimination and detoxification of drugs, xenobiotics and endogenous compounds. Involved in the glucuronidation of the AGTR1 angiotensin receptor antagonist zolarsatan, a drug which can inhibit the effect of angiotensin II. This Rattus norvegicus (Rat) protein is UDP-glucuronosyltransferase 1A5.